The following is a 243-amino-acid chain: 1-(5-phosphoribosyl)-5-[(5-phosphoribosylamino)methylideneamino] imidazole-4-carboxamide isomerase (243 aa).

Residue Asp-8 is the Proton acceptor of the active site. Asp-130 serves as the catalytic Proton donor.

It belongs to the HisA/HisF family.

The protein localises to the cytoplasm. The catalysed reaction is 1-(5-phospho-beta-D-ribosyl)-5-[(5-phospho-beta-D-ribosylamino)methylideneamino]imidazole-4-carboxamide = 5-[(5-phospho-1-deoxy-D-ribulos-1-ylimino)methylamino]-1-(5-phospho-beta-D-ribosyl)imidazole-4-carboxamide. Its pathway is amino-acid biosynthesis; L-histidine biosynthesis; L-histidine from 5-phospho-alpha-D-ribose 1-diphosphate: step 4/9. The sequence is that of 1-(5-phosphoribosyl)-5-[(5-phosphoribosylamino)methylideneamino] imidazole-4-carboxamide isomerase from Acinetobacter baumannii (strain AB307-0294).